Here is a 1250-residue protein sequence, read N- to C-terminus: Myosin-1 (1250 aa).

The segment at 1–43 (MGHSRRPAGGEKKSRGFGRSKAAADVGDGRQTGGKPQVKKATF) is disordered. In terms of domain architecture, Myosin motor spans 51 to 730 (IGVSDLTLLS…TLFALEAMRD (680 aa)). Residue 144–151 (GESGAGKT) participates in ATP binding. Phosphoserine is present on serine 372. Positions 419–501 (SIGILDIYGF…PGVFAALNDA (83 aa)) are actin-binding. IQ domains lie at 734–754 (HNMA…RTEC) and 755–780 (AIRI…QGHQ). The TH1 domain occupies 788 to 978 (RRRMSLLGSR…TIHTGPGEPA (191 aa)). 2 disordered regions span residues 962-1079 (DDSY…PKKP) and 1126-1250 (WTPE…DDDW). The segment covering 1021–1035 (AAQPLPRATPQPAAP) has biased composition (pro residues). A compositionally biased stretch (low complexity) spans 1036–1051 (QPAARAVPQPVAAVAA). 2 stretches are compositionally biased toward pro residues: residues 1064-1077 (APPP…PAPK) and 1139-1151 (TPKP…PPAA). Residues 1076-1137 (PKKPTAKVLY…PEAYLEEQVA (62 aa)) enclose the SH3 domain. The span at 1152-1170 (PRSTPAPATNGAAAAAKAK) shows a compositional bias: low complexity. Positions 1201-1222 (VSMNSHDSSGGSGRGTPNSMSN) are enriched in polar residues. Over residues 1223–1232 (ASLAGGLAEA) the composition is skewed to low complexity.

This sequence belongs to the TRAFAC class myosin-kinesin ATPase superfamily. Myosin family. In terms of processing, phosphorylation of the TEDS site (Ser-372) is required for the polarization of the actin cytoskeleton. Phosphorylation probably activates the myosin-I ATPase activity.

It localises to the cytoplasm. Its subcellular location is the cytoskeleton. The protein localises to the actin patch. In terms of biological role, type-I myosin implicated in the organization of the actin cytoskeleton. Required for proper actin cytoskeleton polarization. At the cell cortex, assembles in patch-like structures together with proteins from the actin-polymerizing machinery and promotes actin assembly. Functions as actin nucleation-promoting factor (NPF) for the Arp2/3 complex. Plays an important role in polarized growth, spore germination, hyphal morphogenesis, and septal wall formation. In Neosartorya fischeri (strain ATCC 1020 / DSM 3700 / CBS 544.65 / FGSC A1164 / JCM 1740 / NRRL 181 / WB 181) (Aspergillus fischerianus), this protein is Myosin-1 (myoA).